A 122-amino-acid polypeptide reads, in one-letter code: Large ribosomal subunit protein uL14 (122 aa).

Belongs to the universal ribosomal protein uL14 family. Part of the 50S ribosomal subunit. Forms a cluster with proteins L3 and L19. In the 70S ribosome, L14 and L19 interact and together make contacts with the 16S rRNA in bridges B5 and B8.

In terms of biological role, binds to 23S rRNA. Forms part of two intersubunit bridges in the 70S ribosome. The polypeptide is Large ribosomal subunit protein uL14 (Lactobacillus delbrueckii subsp. bulgaricus (strain ATCC 11842 / DSM 20081 / BCRC 10696 / JCM 1002 / NBRC 13953 / NCIMB 11778 / NCTC 12712 / WDCM 00102 / Lb 14)).